The chain runs to 188 residues: Protein GrpE (188 aa).

Polar residues predominate over residues 1–10; it reads MPDPTQNPNV. Residues 1–35 are disordered; the sequence is MPDPTQNPNVTPELEQHAAPEAAAEAAPESSADVM. The span at 19 to 32 shows a compositional bias: low complexity; sequence APEAAAEAAPESSA.

It belongs to the GrpE family. As to quaternary structure, homodimer.

It localises to the cytoplasm. In terms of biological role, participates actively in the response to hyperosmotic and heat shock by preventing the aggregation of stress-denatured proteins, in association with DnaK and GrpE. It is the nucleotide exchange factor for DnaK and may function as a thermosensor. Unfolded proteins bind initially to DnaJ; upon interaction with the DnaJ-bound protein, DnaK hydrolyzes its bound ATP, resulting in the formation of a stable complex. GrpE releases ADP from DnaK; ATP binding to DnaK triggers the release of the substrate protein, thus completing the reaction cycle. Several rounds of ATP-dependent interactions between DnaJ, DnaK and GrpE are required for fully efficient folding. This Azoarcus sp. (strain BH72) protein is Protein GrpE.